The chain runs to 154 residues: Myoglobin (154 aa).

A Globin domain is found at 2 to 148 (GLSDGEWQLV…FRNDMAAQYK (147 aa)). The residue at position 4 (Ser4) is a Phosphoserine. His65 serves as a coordination point for nitrite. Residue His65 participates in O2 binding. Thr68 bears the Phosphothreonine mark. His94 contacts heme b.

Monomer.

It is found in the cytoplasm. It localises to the sarcoplasm. The catalysed reaction is Fe(III)-heme b-[protein] + nitric oxide + H2O = Fe(II)-heme b-[protein] + nitrite + 2 H(+). The enzyme catalyses H2O2 + AH2 = A + 2 H2O. Monomeric heme protein which primary function is to store oxygen and facilitate its diffusion within muscle tissues. Reversibly binds oxygen through a pentacoordinated heme iron and enables its timely and efficient release as needed during periods of heightened demand. Depending on the oxidative conditions of tissues and cells, and in addition to its ability to bind oxygen, it also has a nitrite reductase activity whereby it regulates the production of bioactive nitric oxide. Under stress conditions, like hypoxia and anoxia, it also protects cells against reactive oxygen species thanks to its pseudoperoxidase activity. This chain is Myoglobin, found in Rangifer tarandus (Reindeer).